A 260-amino-acid polypeptide reads, in one-letter code: Putative protein phosphatase 2C-like protein 44 (260 aa).

The PPM-type phosphatase domain occupies 41 to 259 (YYTVDRLSYA…SSISCVVIRF (219 aa)).

Belongs to the PP2C family.

This Arabidopsis thaliana (Mouse-ear cress) protein is Putative protein phosphatase 2C-like protein 44.